The primary structure comprises 477 residues: Transcription factor Sox-9-A (477 aa).

Disordered regions lie at residues 1 to 66 and 157 to 274; these read MNLL…ETED and EAER…FRDV. Positions 27–42 are enriched in low complexity; it reads SDDSAGSPCPSGSGSD. Basic and acidic residues-rich tracts occupy residues 56–66 and 157–174; these read GDQELKKETED and EAER…DYKY. Residue Lys-61 forms a Glycyl lysine isopeptide (Lys-Gly) (interchain with G-Cter in SUMO) linkage. The dimerization (DIM) stretch occupies residues 63–103; that stretch reads ETEDEKFPVCIREAVSQVLKGYDWTLVPMPVRVNGSSKNKP. The tract at residues 63 to 103 is PQA; that stretch reads ETEDEKFPVCIREAVSQVLKGYDWTLVPMPVRVNGSSKNKP. Residues 105–173 constitute a DNA-binding region (HMG box); that stretch reads VKRPMNAFMV…QHKKDHPDYK (69 aa). The segment covering 211–222 has biased composition (low complexity); sequence SPHSSSSMSEVH. The interval 224-308 is transactivation domain (TAM); it reads PGEHSGQSQG…LPPNGHPGVG (85 aa). 2 consecutive short sequence motifs (9aaTAD) follow at residues 276–285 and 291–299; these read IGELSSEVIS and DVNEFDQYL. The segment at 301 to 384 is disordered; the sequence is PNGHPGVGST…SDQQQQHSPQ (84 aa). 2 stretches are compositionally biased toward polar residues: residues 308–328 and 346–361; these read GSTQ…SATT and HSLS…SQQR. The interval 361–477 is transactivation domain (TAC); that stretch reads RTHIKTEQLS…QPVYTQLTRP (117 aa). A Glycyl lysine isopeptide (Lys-Gly) (interchain with G-Cter in SUMO) cross-link involves residue Lys-365. Residues 370–384 show a composition bias toward low complexity; sequence SPSHYSDQQQQHSPQ. Positions 428–436 match the 9aaTAD 3 motif; that stretch reads SGLYSTFSY. The disordered stretch occupies residues 446 to 477; sequence TPIADTTGVPSIPQTHSPQHWEQPVYTQLTRP. Positions 453–477 are enriched in polar residues; sequence GVPSIPQTHSPQHWEQPVYTQLTRP.

Interacts with the sumoylation factors ube2i/ubc9 and sumo1. Sumoylated. Lys-365 is the major site of sumoylation, although sumoylation at Lys-61 also occurs. Sumoylation plays a key role in regulating formation of the neural crest and otic placode. In terms of tissue distribution, from mid-gastrula (stage 10.5-11), expressed in a ring around the blastopore, with expression decreasing toward the dorsal side. At stage 12, expression around the blastopore decreases and begins to increase lateral to the neural plate in the presumptive neural crest, where expression dramatically increases around stage 14. Also expressed in the otic placode as early as stage 13/14. By the tailbud stage expression is restricted to the otic cup and then throughout the otic vesicle, with more intense staining at the dorsal-most region, the prospective region of the semicircular canals and endolymphatic duct. At the early tailbud stage (stage 23), expressed in migrating cranial neural crest cells and in the trunk neural crest. Also expressed in the genital ridges, developing eye, nasal placode and prospective pineal gland. Around stage 25, expression is down-regulated in the trunk neural crest but persists in the migrating cranial crest cells as they populate the pharyngeal arches, otic placode, developing eye, genital ridges and notochord. By stage 31, expression remains strong in the pharyngeal arches. Also expressed in the pancreas; first expressed at stage 25 in the pancreatic anlagen, dorsally in diverticulum. As development proceeds, expression continues in pancreatic tissue, being restricted to ventral and dorsal pancreatic buds.

It localises to the nucleus. It is found in the cytoplasm. Transcription factor that plays a key role in chondrocytes differentiation and skeletal development. Specifically binds the 5'-ACAAAG-3' DNA motif present in enhancers and super-enhancers and promotes expression of genes important for chondrogenesis, including COL2A1. Plays a central role in successive steps of chondrocyte differentiation. Absolutely required for precartilaginous condensation, the first step in chondrogenesis during which skeletal progenitors differentiate into prechondrocytes. Together with SOX5 and SOX6, required for overt chondrogenesis when condensed prechondrocytes differentiate into early stage chondrocytes, the second step in chondrogenesis. Later, required to direct hypertrophic maturation and block osteoblast differentiation of growth plate chondrocytes: maintains chondrocyte columnar proliferation, delays prehypertrophy and then prevents osteoblastic differentiation of chondrocytes. Also required for chondrocyte hypertrophy, both indirectly, by keeping the lineage fate of chondrocytes, and directly, by remaining present in upper hypertrophic cells. Low lipid levels are the main nutritional determinant for chondrogenic commitment of skeletal progenitor cells: when lipids levels are low, FOXO transcription factors promote expression of SOX9, which induces chondrogenic commitment and suppresses fatty acid oxidation. In addition to cartilage development, also acts as a regulator of proliferation and differentiation in epithelial stem/progenitor cells. Involved in development of the cranial neural crest, which is fated to form skeletal elements. Also required for otic placode specification during inner ear development. This Xenopus laevis (African clawed frog) protein is Transcription factor Sox-9-A (sox9-a).